A 382-amino-acid chain; its full sequence is D-galactonate dehydratase (382 aa).

Asp-183 is a Mg(2+) binding site. His-185 serves as the catalytic Proton donor. Mg(2+) is bound by residues Glu-209 and Glu-235. His-285 (proton acceptor) is an active-site residue.

It belongs to the mandelate racemase/muconate lactonizing enzyme family. GalD subfamily. Mg(2+) serves as cofactor.

It catalyses the reaction D-galactonate = 2-dehydro-3-deoxy-D-galactonate + H2O. Its pathway is carbohydrate acid metabolism; D-galactonate degradation; D-glyceraldehyde 3-phosphate and pyruvate from D-galactonate: step 1/3. Its function is as follows. Catalyzes the dehydration of D-galactonate to 2-keto-3-deoxy-D-galactonate. The protein is D-galactonate dehydratase of Salmonella dublin (strain CT_02021853).